The primary structure comprises 418 residues: Tyrosine--tRNA ligase (418 aa).

An L-tyrosine-binding site is contributed by tyrosine 34. Positions 39–48 match the 'HIGH' region motif; it reads PTADSLHLGH. 2 residues coordinate L-tyrosine: tyrosine 169 and glutamine 173. The 'KMSKS' region signature appears at 229 to 233; sequence KFGKS. Lysine 232 serves as a coordination point for ATP. The region spanning 352-418 is the S4 RNA-binding domain; the sequence is LNIVEILVSS…GKKKYAVLTY (67 aa).

This sequence belongs to the class-I aminoacyl-tRNA synthetase family. TyrS type 1 subfamily. Homodimer.

It is found in the cytoplasm. It carries out the reaction tRNA(Tyr) + L-tyrosine + ATP = L-tyrosyl-tRNA(Tyr) + AMP + diphosphate + H(+). Functionally, catalyzes the attachment of tyrosine to tRNA(Tyr) in a two-step reaction: tyrosine is first activated by ATP to form Tyr-AMP and then transferred to the acceptor end of tRNA(Tyr). This chain is Tyrosine--tRNA ligase, found in Streptococcus uberis (strain ATCC BAA-854 / 0140J).